The chain runs to 138 residues: Proofreading thioesterase EntH (138 aa).

The active-site Nucleophile or proton acceptor is the glutamate 64.

The protein belongs to the thioesterase PaaI family. Homotetramer. Dimer of dimers. Interacts specifically with the aryl carrier protein (ArCP) domain of EntB.

The protein resides in the cytoplasm. It participates in siderophore biosynthesis; enterobactin biosynthesis. Required for optimal enterobactin synthesis. Acts as a proofreading enzyme that prevents EntB misacylation by hydrolyzing the thioester bound existing between EntB and wrongly charged molecules. The sequence is that of Proofreading thioesterase EntH from Salmonella arizonae (strain ATCC BAA-731 / CDC346-86 / RSK2980).